The primary structure comprises 1294 residues: Voltage-gated inwardly rectifying potassium channel KCNH2 (1294 aa).

At 1–377 the chain is on the cytoplasmic side; it reads RKFIIANARV…RIHRWTILHY (377 aa). The PAS domain occupies 15–44; it reads VIYCNDGFCELCGYSRAEVMQRPCTCDFLH. A PAC domain is found at 66–118; it reads RKVEIAFYRKDGSCFLCLVDVVPVKNEDGAVIMFILNFEVVMEKDMVGSPARD. The segment at 207 to 258 is disordered; sequence LVAPGSPPSSVPGPPHTSPRAHSLNPDASGSSCSLARTRSRESCASVRRASS. A compositionally biased stretch (pro residues) spans 211 to 223; sequence GSPPSSVPGPPHT. Phosphoserine is present on residues serine 212 and serine 216. The segment covering 232-243 has biased composition (polar residues); the sequence is PDASGSSCSLAR. 4 positions are modified to phosphoserine: serine 257, serine 258, serine 294, and serine 325. The chain crosses the membrane as a helical span at residues 378 to 398; it reads SPFKAVWDWLILLLVIYTAVF. Over 399–424 the chain is Extracellular; sequence TPYSAAFLLKEPEEDAQTADCGYACQ. Residues 425-445 form a helical membrane-spanning segment; that stretch reads PLAVVDLIVDIMFIVDILINF. Residues 446-469 are Cytoplasmic-facing; sequence RTTYVNANEEVVSHPGRIAVHYFK. Residues 470–490 traverse the membrane as a helical segment; the sequence is GWFLIDMVAAIPFDLLIFGSG. The Extracellular portion of the chain corresponds to 491–494; the sequence is SEEL. Residues 495 to 515 form a helical; Voltage-sensor membrane-spanning segment; that stretch reads IGLLKTARLLRLVRVARKLDR. The Cytoplasmic segment spans residues 516–521; it reads YSEYGA. The chain crosses the membrane as a helical span at residues 522 to 542; the sequence is AVLFLLMCTFALIAHWLACIW. Residues 543-585 are Extracellular-facing; that stretch reads YAIGNMEQPDMNSRIGWLHNLGDQIGKPYNSSGLGGPSIKDKY. The pore-forming intramembrane region spans 586-606; the sequence is VTALYFTFSSLTSVGFGNVSP. A Selectivity filter motif is present at residues 598–603; that stretch reads SVGFGN. Topologically, residues 607-612 are extracellular; it reads NTNSEK. A helical transmembrane segment spans residues 613 to 633; the sequence is IFSICVMLIGSLMYASIFGNV. At 634 to 1294 the chain is on the cytoplasmic side; sequence SAIIQRLYSG…IAHWLACIWY (661 aa). Residues 716 to 816 form a cNMP-binding domain region; it reads PFRGATKGCL…IHRDDLLEVL (101 aa). The segment at 844 to 956 is disordered; sequence GSPGSTELEG…LTEDGDKSDT (113 aa). Phosphoserine is present on residues serine 845 and serine 848. Basic residues predominate over residues 857 to 866; the sequence is RQRRRKLSFR. Over residues 902 to 913 the composition is skewed to low complexity; sequence GDSPSSGPSSPE. Residue arginine 987 is modified to Omega-N-methylarginine. Residues 1008–1035 are a coiled coil; sequence RGDVESRLDALQRQLNRLETRLSADMAT. A Phosphoserine modification is found at serine 1110.

The protein belongs to the potassium channel family. H (Eag) (TC 1.A.1.20) subfamily. Kv11.1/KCNH2 sub-subfamily. As to quaternary structure, the potassium channel is probably composed of a homo- or heterotetrameric complex of pore-forming alpha subunits that can associate with modulating beta subunits. Interacts with DNAJB12 and DNAJB14; chaperones DNAJB12 and DNAJB14 promote tetramerization. Heteromultimer with KCNH6/ERG2 and KCNH7/ERG3. Interacts with ALG10B. Forms a stable complex with KCNE1 or KCNE2, and that this heteromultimerization regulates Inward rectifier potassium channel activity. Interacts with CANX. The core-glycosylated, but not the fully glycosylated form interacts with RNF207. Interacts with NDFIP1 and NDFIP2; this interaction decreases the cell membrane expression by targeting KCNH2, through interaction with NEDD4L, for the degradation through the multivesicular bodies (MVBs)-lysosomal pathway. In terms of processing, phosphorylated on serine and threonine residues. Phosphorylation by PKA inhibits ion conduction. In terms of tissue distribution, highly expressed in heart and brain.

Its subcellular location is the cell membrane. It catalyses the reaction K(+)(in) = K(+)(out). Its function is as follows. Pore-forming (alpha) subunit of voltage-gated inwardly rectifying potassium channel. Characterized by unusual gating kinetics by producing relatively small outward currents during membrane depolarization and large inward currents during subsequent repolarization which reflect a rapid inactivation during depolarization and quick recovery from inactivation but slow deactivation (closing) during repolarization. Channel properties are modulated by cAMP and subunit assembly. Forms a stable complex with KCNE1 or KCNE2, and that this heteromultimerization regulates inward rectifier potassium channel activity. The chain is Voltage-gated inwardly rectifying potassium channel KCNH2 from Cavia porcellus (Guinea pig).